The primary structure comprises 57 residues: UPF0391 membrane protein Nwi_2359 (57 aa).

A run of 2 helical transmembrane segments spans residues 4–24 (WVVTFLVIALIAGVLGFGGIA) and 30–50 (IAKIIFFIALILFVISAVVGF).

Belongs to the UPF0391 family.

The protein resides in the cell membrane. The sequence is that of UPF0391 membrane protein Nwi_2359 from Nitrobacter winogradskyi (strain ATCC 25391 / DSM 10237 / CIP 104748 / NCIMB 11846 / Nb-255).